Reading from the N-terminus, the 78-residue chain is NEDD8-like protein RUB3 (78 aa).

Gly76 participates in a covalent cross-link: Glycyl lysine isopeptide (Gly-Lys) (interchain with K-? in acceptor proteins). A propeptide spanning residues 77–78 (CC) is cleaved from the precursor.

In terms of tissue distribution, detected in stems and flower buds, but not in leaves, mature flowers and seedlings.

May function as a stable post-translational protein modifier. This Arabidopsis thaliana (Mouse-ear cress) protein is NEDD8-like protein RUB3 (RUB3).